A 361-amino-acid chain; its full sequence is RNA-binding protein 4 (361 aa).

RRM domains are found at residues 2-72 and 78-148; these read VKLF…ASKN and TKLH…LSTS. Lys-79 is covalently cross-linked (Glycyl lysine isopeptide (Lys-Gly) (interchain with G-Cter in SUMO2)). Ser-86 is subject to Phosphoserine. The CCHC-type zinc-finger motif lies at 160 to 177; that stretch reads SGCYRCGKEGHWSKECPI. Residues 196 to 361 are interaction with TNPO3; sequence AVRTPYTMSY…YADRARYSAF (166 aa). Phosphoserine is present on Ser-306.

In terms of assembly, interacts with TNPO3; the interaction mediates nuclear import of the protein and is disrupted by nuclear Ran bound to GTP. Interacts with EIF4G1 and WT1. Interacts with EIF4A1; the interaction is modulated under stress-induced conditions. Interacts with AGO1. Interacts with AGO2; the interaction occurs under both cell proliferation and differentiation conditions and in an RNA- and phosphorylation-independent manner. Interacts with DDX5; the interaction occurs in an RNA-independent manner. Interacts with RBPMS; the interaction allows cooperative assembly of RNA-bound stable cell-specific alternative splicing regulatory complexes. Phosphorylated. Phosphorylated in vitro on Ser-306 by SRPK1. Phosphorylation on Ser-306 is induced upon cell stress signaling, which alters its subcellular localization and may modulate its activity on IRES-mediated mRNA translation. Phosphorylated. Phosphorylation on Ser-306 is induced upon cell muscle differentiation. As to expression, expressed in the suprachiasmatic nucleus (SCN). Expressed in myocytes; expression gradually increases during muscle cell differentiation (at protein level). Expressed in the suprachiasmatic nucleus (SCN).

It is found in the nucleus. It localises to the nucleolus. The protein localises to the nucleus speckle. Its subcellular location is the cytoplasm. The protein resides in the cytoplasmic granule. In terms of biological role, RNA-binding factor involved in multiple aspects of cellular processes like alternative splicing of pre-mRNA and translation regulation. Modulates alternative 5'-splice site and exon selection. Acts as a muscle cell differentiation-promoting factor. Activates exon skipping of the PTB pre-mRNA during muscle cell differentiation. Antagonizes the activity of the splicing factor PTBP1 to modulate muscle cell-specific exon selection of alpha tropomyosin. Binds to intronic pyrimidine-rich sequence of the TPM1 and MAPT pre-mRNAs. Required for the translational activation of PER1 mRNA in response to circadian clock. Binds directly to the 3'-UTR of the PER1 mRNA. Exerts a suppressive activity on Cap-dependent translation via binding to CU-rich responsive elements within the 3'UTR of mRNAs, a process increased under stress conditions or during myocytes differentiation. Recruits EIF4A1 to stimulate IRES-dependent translation initiation in respons to cellular stress. Associates to internal ribosome entry segment (IRES) in target mRNA species under stress conditions. Plays a role for miRNA-guided RNA cleavage and translation suppression by promoting association of AGO2-containing miRNPs with their cognate target mRNAs. Associates with miRNAs during muscle cell differentiation. Binds preferentially to 5'-CGCGCG[GCA]-3' motif in vitro. This chain is RNA-binding protein 4 (Rbm4), found in Mus musculus (Mouse).